The sequence spans 80 residues: UPF0291 protein EF_1580 (80 aa).

The tract at residues 60–80 (TDVTPEKLKKIQREKGLHNRK) is disordered. Residues 63–80 (TPEKLKKIQREKGLHNRK) are compositionally biased toward basic and acidic residues.

The protein belongs to the UPF0291 family.

It localises to the cytoplasm. This is UPF0291 protein EF_1580 from Enterococcus faecalis (strain ATCC 700802 / V583).